We begin with the raw amino-acid sequence, 321 residues long: Phospho-N-acetylmuramoyl-pentapeptide-transferase (321 aa).

The next 10 membrane-spanning stretches (helical) occupy residues 6 to 26 (MLIPMVSAFAITIMFMPLFIG), 53 to 73 (TMGGLIFIAAIIVSAIWVGIW), 77 to 97 (LTLSVWVSLFILVLYGLLGFY), 121 to 141 (ILGAIIFLIAYFHEGFDHTLW), 144 to 164 (IIGNVSAAWFYVLFVIVWLVG), 175 to 195 (LDGLVAGQTTISFGTYAIIAA), 200 to 220 (TDVLIVCLVTIGAMLGFLMFN), 226 to 246 (IFMGDLGSLALGGMLAVVAIL), 251 to 271 (WSLLLIGIIYVTETASVILQV), and 301 to 321 (IDLTFWLVGLIGSGIYLAFFL).

It belongs to the glycosyltransferase 4 family. MraY subfamily. Mg(2+) serves as cofactor.

The protein localises to the cell membrane. It catalyses the reaction UDP-N-acetyl-alpha-D-muramoyl-L-alanyl-gamma-D-glutamyl-L-lysyl-D-alanyl-D-alanine + di-trans,octa-cis-undecaprenyl phosphate = Mur2Ac(oyl-L-Ala-gamma-D-Glu-L-Lys-D-Ala-D-Ala)-di-trans,octa-cis-undecaprenyl diphosphate + UMP. It participates in cell wall biogenesis; peptidoglycan biosynthesis. Functionally, catalyzes the initial step of the lipid cycle reactions in the biosynthesis of the cell wall peptidoglycan: transfers peptidoglycan precursor phospho-MurNAc-pentapeptide from UDP-MurNAc-pentapeptide onto the lipid carrier undecaprenyl phosphate, yielding undecaprenyl-pyrophosphoryl-MurNAc-pentapeptide, known as lipid I. This is Phospho-N-acetylmuramoyl-pentapeptide-transferase from Lacticaseibacillus paracasei (strain ATCC 334 / BCRC 17002 / CCUG 31169 / CIP 107868 / KCTC 3260 / NRRL B-441) (Lactobacillus paracasei).